The following is a 95-amino-acid chain: Co-chaperonin GroES (95 aa).

It belongs to the GroES chaperonin family. In terms of assembly, heptamer of 7 subunits arranged in a ring. Interacts with the chaperonin GroEL.

It is found in the cytoplasm. In terms of biological role, together with the chaperonin GroEL, plays an essential role in assisting protein folding. The GroEL-GroES system forms a nano-cage that allows encapsulation of the non-native substrate proteins and provides a physical environment optimized to promote and accelerate protein folding. GroES binds to the apical surface of the GroEL ring, thereby capping the opening of the GroEL channel. The protein is Co-chaperonin GroES of Staphylococcus saprophyticus subsp. saprophyticus (strain ATCC 15305 / DSM 20229 / NCIMB 8711 / NCTC 7292 / S-41).